Here is a 322-residue protein sequence, read N- to C-terminus: CXXC-type zinc finger protein 5 (322 aa).

Residues 1-10 (MSSLGGGSQD) are compositionally biased toward gly residues. The segment at 1–100 (MSSLGGGSQD…SGGGSMMGGE (100 aa)) is disordered. Low complexity-rich tracts occupy residues 11–20 (AGGSSSSSTN) and 28–52 (SGPK…VADD). Phosphothreonine is present on T53. Gly residues predominate over residues 87-97 (SSGGSGGGSMM). Residues 256 to 297 (GKKKRKRCGMCAPCRRRINCEQCSSCRNRKTGHQICKFRKCE) form a CXXC-type zinc finger. A Nuclear localization signal motif is present at residues 257–262 (KKKRKR). Residues C263, C266, C269, C275, C278, C281, C291, and C296 each coordinate Zn(2+).

Interacts with DVL1. Interacts with RBPJ.

Its subcellular location is the nucleus. It localises to the cytoplasm. Functionally, may indirectly participate in activation of the NF-kappa-B and MAPK pathways. Acts as a mediator of BMP4-mediated modulation of canonical Wnt signaling activity in neural stem cells. Required for DNA damage-induced ATM phosphorylation, p53 activation and cell cycle arrest. Involved in myelopoiesis. Binds to the oxygen responsive element of COX4I2 and represses its transcription under hypoxia conditions (4% oxygen), as well as normoxia conditions (20% oxygen). May repress COX4I2 transactivation induced by CHCHD2 and RBPJ. Binds preferentially to DNA containing cytidine-phosphate-guanosine (CpG) dinucleotides over CpH (H=A, T, and C), hemimethylated-CpG and hemimethylated-hydroxymethyl-CpG. This chain is CXXC-type zinc finger protein 5 (CXXC5), found in Pongo abelii (Sumatran orangutan).